Consider the following 232-residue polypeptide: Ubiquinone biosynthesis O-methyltransferase (232 aa).

4 residues coordinate S-adenosyl-L-methionine: R36, G55, D76, and M120.

The protein belongs to the methyltransferase superfamily. UbiG/COQ3 family.

The catalysed reaction is a 3-demethylubiquinol + S-adenosyl-L-methionine = a ubiquinol + S-adenosyl-L-homocysteine + H(+). It carries out the reaction a 3-(all-trans-polyprenyl)benzene-1,2-diol + S-adenosyl-L-methionine = a 2-methoxy-6-(all-trans-polyprenyl)phenol + S-adenosyl-L-homocysteine + H(+). The protein operates within cofactor biosynthesis; ubiquinone biosynthesis. Functionally, O-methyltransferase that catalyzes the 2 O-methylation steps in the ubiquinone biosynthetic pathway. This is Ubiquinone biosynthesis O-methyltransferase from Paraburkholderia xenovorans (strain LB400).